Consider the following 717-residue polypeptide: Catalase-peroxidase (717 aa).

Positions 1 to 20 (MSGKCPVMHGGNTSTGTSNK) are disordered. Residues 11–20 (GNTSTGTSNK) show a composition bias toward polar residues. A cross-link (tryptophyl-tyrosyl-methioninium (Trp-Tyr) (with M-245)) is located at residues 91–219 (WHSAGSYRLA…LAAVQMGLIY (129 aa)). His92 serves as the catalytic Proton acceptor. A cross-link (tryptophyl-tyrosyl-methioninium (Tyr-Met) (with W-91)) is located at residues 219–245 (YVNPEGVNGQPDPQKTAEQVRETFARM). His260 serves as a coordination point for heme b.

This sequence belongs to the peroxidase family. Peroxidase/catalase subfamily. As to quaternary structure, homodimer or homotetramer. It depends on heme b as a cofactor. Formation of the three residue Trp-Tyr-Met cross-link is important for the catalase, but not the peroxidase activity of the enzyme.

It catalyses the reaction H2O2 + AH2 = A + 2 H2O. The catalysed reaction is 2 H2O2 = O2 + 2 H2O. Its function is as follows. Bifunctional enzyme with both catalase and broad-spectrum peroxidase activity. In Chromohalobacter salexigens (strain ATCC BAA-138 / DSM 3043 / CIP 106854 / NCIMB 13768 / 1H11), this protein is Catalase-peroxidase.